The sequence spans 535 residues: Pre-mRNA-splicing factor SLU7-A (535 aa).

Residues 21 to 44 are disordered; that stretch reads EEARKAGLAPAEVDEDGKEINPHI. The segment at 96-109 adopts a CCHC-type zinc-finger fold; it reads CQNCGAMTHTAKAC. Basic and acidic residues predominate over residues 176-190; that stretch reads LKKLEEKNNNEKGDD. Disordered stretches follow at residues 176-204 and 489-508; these read LKKL…DLRV and EDLS…NVKY. Over residues 191–203 the composition is skewed to acidic residues; it reads ANSDGEEDEDDLR. Position 193 is a phosphoserine (S193). Residues 486–493 carry the Nuclear localization signal motif; sequence LKKEDLSR. Residues 489 to 501 are compositionally biased toward basic and acidic residues; sequence EDLSRREEKDERK.

This sequence belongs to the SLU7 family. Mainly expressed in tissues undergoing cell proliferation, particularly in lateral organs.

It localises to the nucleus. Participates in the second catalytic step of pre-mRNA splicing, when the free hydroxyl group of exon I attacks the 3'-splice site to generate spliced mRNA and the excised lariat intron. Together with SMP2, involved in the timing of cell cycle arrest during leaf development, in a STRUWWELPETER (SWP) dependent manner; promotes cell proliferation in developing organs. The chain is Pre-mRNA-splicing factor SLU7-A from Arabidopsis thaliana (Mouse-ear cress).